The following is a 229-amino-acid chain: Multiple organellar RNA editing factor 5, chloroplastic/mitochondrial (229 aa).

The transit peptide at 1–57 (MAKTLARSTASRITKRLISTSGATTPSPSYILSRRSTPVFSHAVGFISSLNRFTTIR) directs the protein to the chloroplast and mitochondrion.

This sequence belongs to the MORF family. In terms of assembly, homodimer and heterodimers with MORF8/RIP1, MORF3/RIP3, MORF6/RIP6, MORF7/RIP7 and MORF9/RIP9.

Its subcellular location is the mitochondrion. The protein localises to the plastid. The protein resides in the chloroplast. Involved in organellar RNA editing. Required for the processing of few RNA editing sites in mitochondria. The chain is Multiple organellar RNA editing factor 5, chloroplastic/mitochondrial from Arabidopsis thaliana (Mouse-ear cress).